Reading from the N-terminus, the 404-residue chain is Pectate lyase E (404 aa).

A signal peptide spans 1-41 (MNNSRMSSVSTQKTTGRSALGTKSALAAIIATTMMVSVASA). Residues aspartate 182 and aspartate 225 each contribute to the Ca(2+) site. Arginine 278 is a catalytic residue.

Belongs to the polysaccharide lyase 1 family. PLBC subfamily. It depends on Ca(2+) as a cofactor.

Its subcellular location is the secreted. It carries out the reaction Eliminative cleavage of (1-&gt;4)-alpha-D-galacturonan to give oligosaccharides with 4-deoxy-alpha-D-galact-4-enuronosyl groups at their non-reducing ends.. It functions in the pathway glycan metabolism; pectin degradation; 2-dehydro-3-deoxy-D-gluconate from pectin: step 2/5. In terms of biological role, involved in maceration and soft-rotting of plant tissue. Pectate lyases have been implicated as pathogenicity factors which induce maceration or rotting of plant tissue. PelE is sufficient to induce these effects under laboratory conditions. This Dickeya chrysanthemi (Pectobacterium chrysanthemi) protein is Pectate lyase E (pelE).